Reading from the N-terminus, the 341-residue chain is UDP-3-O-acylglucosamine N-acyltransferase (341 aa).

The active-site Proton acceptor is histidine 241.

The protein belongs to the transferase hexapeptide repeat family. LpxD subfamily. In terms of assembly, homotrimer.

The catalysed reaction is a UDP-3-O-[(3R)-3-hydroxyacyl]-alpha-D-glucosamine + a (3R)-hydroxyacyl-[ACP] = a UDP-2-N,3-O-bis[(3R)-3-hydroxyacyl]-alpha-D-glucosamine + holo-[ACP] + H(+). The protein operates within bacterial outer membrane biogenesis; LPS lipid A biosynthesis. Functionally, catalyzes the N-acylation of UDP-3-O-acylglucosamine using 3-hydroxyacyl-ACP as the acyl donor. Is involved in the biosynthesis of lipid A, a phosphorylated glycolipid that anchors the lipopolysaccharide to the outer membrane of the cell. This is UDP-3-O-acylglucosamine N-acyltransferase from Histophilus somni (strain 129Pt) (Haemophilus somnus).